Here is a 270-residue protein sequence, read N- to C-terminus: MDYYFTKGKPQLVNMKTPIYLVTQFQQLMDLMQNQYEVSCLELMQRSGKAACDFLVYRWPKVKKISIFCGRGDNGGQGYVLAQQAKKMGMIPTVWQVGHQMSMSKPPQMHKEVWYEMNSCHQQGIVLHTYSPDIDLGDPELIVDALFGVGLYGHVRPEIALLLQRLQQFTVPILAIEVPTGINASTGEIAGNALAATATITFLCMKLGLLINDGKIYSGEIAFDDLLAPEEIYQQVKGIEESSLLDSSTCFSKKIWYRNKTQKGWQLSIN.

The region spanning 25–234 is the YjeF N-terminal domain; sequence FQQLMDLMQN…DLLAPEEIYQ (210 aa). Residue 73 to 77 participates in (6S)-NADPHX binding; it reads DNGGQ. Residues asparagine 74 and aspartate 144 each coordinate K(+). Residues 148–154 and glutamate 177 each bind (6S)-NADPHX; that span reads GVGLYGH. Threonine 180 contributes to the K(+) binding site.

The protein belongs to the NnrE/AIBP family. K(+) serves as cofactor.

It catalyses the reaction (6R)-NADHX = (6S)-NADHX. The enzyme catalyses (6R)-NADPHX = (6S)-NADPHX. Its function is as follows. Catalyzes the epimerization of the S- and R-forms of NAD(P)HX, a damaged form of NAD(P)H that is a result of enzymatic or heat-dependent hydration. This is a prerequisite for the S-specific NAD(P)H-hydrate dehydratase to allow the repair of both epimers of NAD(P)HX. The protein is NAD(P)H-hydrate epimerase of Legionella pneumophila (strain Paris).